We begin with the raw amino-acid sequence, 273 residues long: 5-deoxy-glucuronate isomerase (273 aa).

It belongs to the isomerase IolB family.

The catalysed reaction is 5-deoxy-D-glucuronate = 5-dehydro-2-deoxy-D-gluconate. Its pathway is polyol metabolism; myo-inositol degradation into acetyl-CoA; acetyl-CoA from myo-inositol: step 4/7. Involved in the isomerization of 5-deoxy-glucuronate (5DG) to 5-dehydro-2-deoxy-D-gluconate (DKG or 2-deoxy-5-keto-D-gluconate). The chain is 5-deoxy-glucuronate isomerase from Listeria monocytogenes serotype 4a (strain HCC23).